The following is a 249-amino-acid chain: 2,3-bisphosphoglycerate-dependent phosphoglycerate mutase (249 aa).

Residues 9 to 16 (RHGQSQWN), 22 to 23 (TG), Arg61, 88 to 91 (ERHY), Lys99, 115 to 116 (RR), and 184 to 185 (GN) contribute to the substrate site. The active-site Tele-phosphohistidine intermediate is His10. Glu88 functions as the Proton donor/acceptor in the catalytic mechanism.

Belongs to the phosphoglycerate mutase family. BPG-dependent PGAM subfamily. In terms of assembly, homodimer.

The catalysed reaction is (2R)-2-phosphoglycerate = (2R)-3-phosphoglycerate. It functions in the pathway carbohydrate degradation; glycolysis; pyruvate from D-glyceraldehyde 3-phosphate: step 3/5. Functionally, catalyzes the interconversion of 2-phosphoglycerate and 3-phosphoglycerate. In Xylella fastidiosa (strain M12), this protein is 2,3-bisphosphoglycerate-dependent phosphoglycerate mutase.